A 232-amino-acid polypeptide reads, in one-letter code: Orotidine 5'-phosphate decarboxylase (232 aa).

Residues aspartate 13, lysine 35, 62 to 71 (DLKFHDIPNT), threonine 122, arginine 182, glutamine 191, glycine 211, and arginine 212 each bind substrate. Catalysis depends on lysine 64, which acts as the Proton donor.

It belongs to the OMP decarboxylase family. Type 1 subfamily. As to quaternary structure, homodimer.

It catalyses the reaction orotidine 5'-phosphate + H(+) = UMP + CO2. The protein operates within pyrimidine metabolism; UMP biosynthesis via de novo pathway; UMP from orotate: step 2/2. Functionally, catalyzes the decarboxylation of orotidine 5'-monophosphate (OMP) to uridine 5'-monophosphate (UMP). The chain is Orotidine 5'-phosphate decarboxylase from Pseudomonas fluorescens (strain Pf0-1).